The chain runs to 135 residues: ATP synthase epsilon chain (135 aa).

This sequence belongs to the ATPase epsilon chain family. In terms of assembly, F-type ATPases have 2 components, CF(1) - the catalytic core - and CF(0) - the membrane proton channel. CF(1) has five subunits: alpha(3), beta(3), gamma(1), delta(1), epsilon(1). CF(0) has three main subunits: a, b and c.

The protein localises to the cell inner membrane. In terms of biological role, produces ATP from ADP in the presence of a proton gradient across the membrane. The polypeptide is ATP synthase epsilon chain (Mesorhizobium japonicum (strain LMG 29417 / CECT 9101 / MAFF 303099) (Mesorhizobium loti (strain MAFF 303099))).